The sequence spans 342 residues: MGDREECLSTPQPPMSVVKSIELVLPEDRIYLAGSSIKGQVILTLNSTLVDPIVKVELVGRGYVEWSEEAGASCDYSRNVICNNKADYVHKTKTFPVEDNWLSAGSHTFDFHFNLPPRLPSTFTSKFGHVFYFVQASCMGREHILAKKRMYLLVQGTSTFHKETPFQNPLFVEAEEKVSYNCCRQGTVCLQIQMERNTFTPGEKVVFTTEINNQTSKCIKTVVFALYAHIQYEGFTPSAERRSRLDSSELLRQEANTPVTRFNTTKVVSTFNLPLLLSVSSSTQDGEIMHTRYELVTTVHLPWSLTSLKAKVPIIITSASVDSAICQLSEDGVLPVNPDHQN.

This sequence belongs to the arrestin family. In terms of tissue distribution, testis-enriched.

The protein resides in the membrane. Functionally, plays an essential role in spermatogenesis. May be involved in the anchoring of the sperm head to the tail during spermatogenesis by affecting SEC22A-mediated SUN5 and NDC1 transport and localization. This Homo sapiens (Human) protein is Arrestin domain-containing protein 5 (ARRDC5).